The chain runs to 538 residues: Putative ABC1 protein At2g40090 (538 aa).

An N-terminal signal peptide occupies residues 1–26; sequence MAARSLWRTRTKLLVVGTALCGGSGA.

This sequence belongs to the protein kinase superfamily. ADCK protein kinase family.

This chain is Putative ABC1 protein At2g40090, found in Arabidopsis thaliana (Mouse-ear cress).